The chain runs to 303 residues: uncharacterized protein (303 aa).

This is an uncharacterized protein from Archaeoglobus fulgidus (strain ATCC 49558 / DSM 4304 / JCM 9628 / NBRC 100126 / VC-16).